The chain runs to 511 residues: Probable cytochrome P450 4ac2 (511 aa).

Glu318 and Cys455 together coordinate heme.

The protein belongs to the cytochrome P450 family. Heme is required as a cofactor.

It localises to the endoplasmic reticulum membrane. Its subcellular location is the microsome membrane. May be involved in the metabolism of insect hormones and in the breakdown of synthetic insecticides. In Drosophila melanogaster (Fruit fly), this protein is Probable cytochrome P450 4ac2 (Cyp4ac2).